The chain runs to 352 residues: MIGLKLVTVLFAVATITHAAELQRVPLYKLVHVFINTQYAGITKIGNQNFLTVFDSTSCNVVVASQECVGGACVCPNLQKYEKLKPKYISDGNVQVKFFDTGSAVGRGIEDSLTISNLTTSQQDIVLADELSQEVCILSADVVVGIAAPGCPNALKGKTVLENFVEENLIAPVFSIHHARFQDGEHFGEIIFGGSDWKYVDGEFTYVPLVGDDSWKFRLDGVKIGDTTVAPAGTQAIIDTSKAIIVGPKAYVNPINEAIGCVVEKTTTRRICKLDCSKIPSLPDVTFVINGRNFNISSQYYIQQNGNLCYSGFQPCGHSDHFFIGDFFVDHYYSEFNWENKTMGFGRSVESV.

A signal peptide spans 1–19; it reads MIGLKLVTVLFAVATITHA. Residues 20–24 constitute a propeptide, removed in mature form; that stretch reads AELQR. The Peptidase A1 domain maps to 39–346; that stretch reads YAGITKIGNQ…NWENKTMGFG (308 aa). Asp55 is a catalytic residue. 3 disulfide bridges follow: Cys59–Cys151, Cys68–Cys73, and Cys75–Cys136. Asn117 is a glycosylation site (N-linked (GlcNAc...) asparagine). 2 residues coordinate Zn(2+): His178 and His186. Residue Asp239 is part of the active site. Intrachain disulfides connect Cys261/Cys272 and Cys276/Cys309. N-linked (GlcNAc...) asparagine glycosylation occurs at Asn295. The Zn(2+) site is built by Asp326 and Asp330. Asn340 is a glycosylation site (N-linked (GlcNAc...) asparagine).

The protein belongs to the peptidase A1 family. Homodimer.

In terms of biological role, functions as a digestive enzyme in the cockroach. The polypeptide is Aspartic protease Bla g 2 (Blattella germanica (German cockroach)).